The following is a 298-amino-acid chain: Cholesterol 25-hydroxylase (298 aa).

Residue asparagine 5 is glycosylated (N-linked (GlcNAc...) asparagine). The next 3 helical transmembrane spans lie at 38–58 (FFPVIFSIFTYLGFCLPFVVL), 84–104 (LLPCLGLTLYQHLVFVFPVTL), and 124–144 (LLSHVLICLLLFDTEIFAWHL). Positions 128-263 (VLICLLLFDT…FTHWDKMLGT (136 aa)) constitute a Fatty acid hydroxylase domain. The Histidine box-1 motif lies at 142–146 (WHLLH). The Histidine box-2 signature appears at 157-161 (HKVHH). A glycan (N-linked (GlcNAc...) asparagine) is linked at asparagine 163. Transmembrane regions (helical) follow at residues 167–187 (FALATQYMSVWELLSLTFFDV) and 190–210 (VAMLQCHPLTILVFHVVNIWL). A Histidine box-3 motif is present at residues 238 to 244 (HHDLHHS).

It belongs to the sterol desaturase family. It depends on Fe cation as a cofactor. In terms of processing, N-glycosylated. As to expression, expressed in testicular macrophages at all stages, with the highest level in 10 day old animals.

The protein localises to the endoplasmic reticulum membrane. It carries out the reaction cholesterol + AH2 + O2 = 25-hydroxycholesterol + A + H2O. The enzyme catalyses cholesterol + NADPH + O2 + H(+) = 25-hydroxycholesterol + NADP(+) + H2O. Catalyzes the formation of 25-hydroxycholesterol from cholesterol, leading to repress cholesterol biosynthetic enzymes. Plays a key role in cell positioning and movement in lymphoid tissues: 25-hydroxycholesterol is an intermediate in biosynthesis of 7-alpha,25-dihydroxycholesterol (7-alpha,25-OHC), an oxysterol that acts as a ligand for the G protein-coupled receptor GPR183/EBI2, a chemotactic receptor for a number of lymphoid cells. May play an important role in regulating lipid metabolism by synthesizing a corepressor that blocks sterol regulatory element binding protein (SREBP) processing. In testis, production of 25-hydroxycholesterol by macrophages plays a role in Leydig cell differentiation. Required to restrain inflammation in macrophages: production of 25-hydroxycholesterol protects macrophages from cholesterol overload, thereby preventing mitochondrial DNA release and subsequent activation of the AIM2 inflammasome. Interferon-stimulated gene which has broad antiviral activities against a wide range of enveloped viruses. In terms of biological role, catalyzes the formation of 25-hydroxycholesterol from cholesterol, leading to repress cholesterol biosynthetic enzymes. Plays a key role in cell positioning and movement in lymphoid tissues: 25-hydroxycholesterol is an intermediate in biosynthesis of 7-alpha,25-dihydroxycholesterol (7-alpha,25-OHC), an oxysterol that acts as a ligand for the G protein-coupled receptor GPR183/EBI2, a chemotactic receptor for a number of lymphoid cells. May play an important role in regulating lipid metabolism by synthesizing a corepressor that blocks sterol regulatory element binding protein (SREBP) processing. As an interferon-stimulated gene, has broad antiviral activities against a wide range of enveloped viruses. Its product, 25-hydroxycholesterol, activates the ER-localized enzyme ACAT to induce internalization of accessible cholesterol on the plasma membrane and restricts virus-host membranes fusion which inhibits virus replication. In testis, production of 25-hydroxycholesterol by macrophages plays a role in Leydig cell differentiation. The polypeptide is Cholesterol 25-hydroxylase (Rattus norvegicus (Rat)).